A 206-amino-acid chain; its full sequence is Ribosomal RNA small subunit methyltransferase G (206 aa).

S-adenosyl-L-methionine contacts are provided by residues glycine 71, phenylalanine 76, 125–126 (IE), and arginine 139.

It belongs to the methyltransferase superfamily. RNA methyltransferase RsmG family.

The protein resides in the cytoplasm. The catalysed reaction is guanosine(527) in 16S rRNA + S-adenosyl-L-methionine = N(7)-methylguanosine(527) in 16S rRNA + S-adenosyl-L-homocysteine. Functionally, specifically methylates the N7 position of guanine in position 527 of 16S rRNA. The chain is Ribosomal RNA small subunit methyltransferase G from Cereibacter sphaeroides (strain ATCC 17029 / ATH 2.4.9) (Rhodobacter sphaeroides).